Here is a 507-residue protein sequence, read N- to C-terminus: ATP synthase subunit alpha, mitochondrial (507 aa).

171 to 178 (GDRQTGKT) is an ATP binding site.

This sequence belongs to the ATPase alpha/beta chains family. In terms of assembly, F-type ATPases have 2 components, CF(1) - the catalytic core - and CF(0) - the membrane proton channel. CF(1) has five subunits: alpha(3), beta(3), gamma(1), delta(1), epsilon(1). CF(0) has three main subunits: a, b and c.

The protein localises to the mitochondrion. Its subcellular location is the mitochondrion inner membrane. In terms of biological role, mitochondrial membrane ATP synthase (F(1)F(0) ATP synthase or Complex V) produces ATP from ADP in the presence of a proton gradient across the membrane which is generated by electron transport complexes of the respiratory chain. F-type ATPases consist of two structural domains, F(1) - containing the extramembraneous catalytic core, and F(0) - containing the membrane proton channel, linked together by a central stalk and a peripheral stalk. During catalysis, ATP synthesis in the catalytic domain of F(1) is coupled via a rotary mechanism of the central stalk subunits to proton translocation. Subunits alpha and beta form the catalytic core in F(1). Rotation of the central stalk against the surrounding alpha(3)beta(3) subunits leads to hydrolysis of ATP in three separate catalytic sites on the beta subunits. Subunit alpha does not bear the catalytic high-affinity ATP-binding sites. The protein is ATP synthase subunit alpha, mitochondrial (ATPA) of Arabidopsis thaliana (Mouse-ear cress).